Consider the following 191-residue polypeptide: Cell division protein SepF (191 aa).

Over residues 153–178 (FPEEASPSNVSSKKTSQYKFETNTTP) the composition is skewed to polar residues. Residues 153–191 (FPEEASPSNVSSKKTSQYKFETNTTPEPAWGESKLSAYN) form a disordered region.

Belongs to the SepF family. Homodimer. Interacts with FtsZ.

It localises to the cytoplasm. Its function is as follows. Cell division protein that is part of the divisome complex and is recruited early to the Z-ring. Probably stimulates Z-ring formation, perhaps through the cross-linking of FtsZ protofilaments. Its function overlaps with FtsA. In Prochlorococcus marinus subsp. pastoris (strain CCMP1986 / NIES-2087 / MED4), this protein is Cell division protein SepF.